The sequence spans 37 residues: Cytochrome b6-f complex subunit 5 (37 aa).

A helical membrane pass occupies residues 5–25; sequence FLFGIVLGLIPITLAGLFVTA.

The protein belongs to the PetG family. In terms of assembly, the 4 large subunits of the cytochrome b6-f complex are cytochrome b6, subunit IV (17 kDa polypeptide, PetD), cytochrome f and the Rieske protein, while the 4 small subunits are PetG, PetL, PetM and PetN. The complex functions as a dimer.

It is found in the plastid thylakoid membrane. In terms of biological role, component of the cytochrome b6-f complex, which mediates electron transfer between photosystem II (PSII) and photosystem I (PSI), cyclic electron flow around PSI, and state transitions. PetG is required for either the stability or assembly of the cytochrome b6-f complex. In Cuscuta reflexa (Southern Asian dodder), this protein is Cytochrome b6-f complex subunit 5.